The sequence spans 447 residues: DNA primase DnaG (447 aa).

Residues 200–274 form the Toprim domain; that stretch reads DSIIVVEGRA…DIDYVARAPE (75 aa). Mg(2+) contacts are provided by E206, D248, and D250. A disordered region spans residues 316-339; the sequence is ERRRGGARKQEYTKKGSLNPQPQV.

This sequence belongs to the archaeal DnaG primase family. As to quaternary structure, forms a ternary complex with MCM helicase and DNA. Component of the archaeal exosome complex. Mg(2+) serves as cofactor.

The catalysed reaction is ssDNA + n NTP = ssDNA/pppN(pN)n-1 hybrid + (n-1) diphosphate.. Functionally, RNA polymerase that catalyzes the synthesis of short RNA molecules used as primers for DNA polymerase during DNA replication. Also part of the exosome, which is a complex involved in RNA degradation. Acts as a poly(A)-binding protein that enhances the interaction between heteromeric, adenine-rich transcripts and the exosome. The polypeptide is DNA primase DnaG (Pyrococcus furiosus (strain ATCC 43587 / DSM 3638 / JCM 8422 / Vc1)).